Consider the following 172-residue polypeptide: Protein GrpE (172 aa).

Residues 1-23 form a disordered region; that stretch reads MNQDHPEFDSEDLSQNPPETDPL.

Belongs to the GrpE family. Homodimer.

It is found in the cytoplasm. Functionally, participates actively in the response to hyperosmotic and heat shock by preventing the aggregation of stress-denatured proteins, in association with DnaK and GrpE. It is the nucleotide exchange factor for DnaK and may function as a thermosensor. Unfolded proteins bind initially to DnaJ; upon interaction with the DnaJ-bound protein, DnaK hydrolyzes its bound ATP, resulting in the formation of a stable complex. GrpE releases ADP from DnaK; ATP binding to DnaK triggers the release of the substrate protein, thus completing the reaction cycle. Several rounds of ATP-dependent interactions between DnaJ, DnaK and GrpE are required for fully efficient folding. This Xanthomonas axonopodis pv. citri (strain 306) protein is Protein GrpE.